We begin with the raw amino-acid sequence, 414 residues long: Na(+)-translocating NADH-quinone reductase subunit B (414 aa).

3 consecutive transmembrane segments (helical) span residues 56–76 (IMIM…YNAG), 129–149 (FLPI…LFCM), and 164–184 (ILFA…LGIT). Thr236 carries the FMN phosphoryl threonine modification. 5 helical membrane-spanning segments follow: residues 268–288 (IPGS…AMIV), 297–317 (IIAG…VIGS), 325–345 (MPWH…FMAT), 358–378 (WWYG…NPAY), and 381–401 (GMML…HVVI).

The protein belongs to the NqrB/RnfD family. As to quaternary structure, composed of six subunits; NqrA, NqrB, NqrC, NqrD, NqrE and NqrF. It depends on FMN as a cofactor.

The protein localises to the cell inner membrane. It catalyses the reaction a ubiquinone + n Na(+)(in) + NADH + H(+) = a ubiquinol + n Na(+)(out) + NAD(+). With respect to regulation, this reaction is tightly coupled to the Na(+) pumping activity and specifically requires Na(+) for activity. Inhibited by korormicin and 2-N-heptyl-4-hydroxyquinoline N-oxide (HQNO). In terms of biological role, NQR complex catalyzes the reduction of ubiquinone-1 to ubiquinol by two successive reactions, coupled with the transport of Na(+) ions from the cytoplasm to the periplasm. NqrA to NqrE are probably involved in the second step, the conversion of ubisemiquinone to ubiquinol. This is Na(+)-translocating NADH-quinone reductase subunit B from Vibrio alginolyticus.